A 390-amino-acid polypeptide reads, in one-letter code: Nuclear receptor subfamily 2 group F member 6 (390 aa).

Over residues 1–15 the composition is skewed to gly residues; that stretch reads MAMVTGGWGDPGGDT. Residues 1-50 are disordered; that stretch reads MAMVTGGWGDPGGDTNGVDKAGGSYPRATEDDSASPPGATSDAEPGDEER. S35 and S41 each carry phosphoserine. Positions 54–129 form a DNA-binding region, nuclear receptor; that stretch reads QVDCVVCGDK…VGMRKEAVQR (76 aa). An NR C4-type zinc finger spans residues 57–77; the sequence is CVVCGDKSSGKHYGVFTCEGC. S84 carries the post-translational modification Phosphoserine. An NR C4-type zinc finger spans residues 93–117; the sequence is CRSNRDCQIDQHHRNQCQYCRLKKC. In terms of domain architecture, NR LBD spans 157-380; that stretch reads PVSELIAQLL…TLIRDMLLSG (224 aa). The tract at residues 314 to 390 is important for dimerization; that stretch reads LQEKAQVALT…STFNWPYGSG (77 aa).

This sequence belongs to the nuclear hormone receptor family. NR2 subfamily. In terms of assembly, binds DNA as dimer; homodimer and heterodimer with NR2F2 and probably NR2F1. Interacts with THRB.

Its subcellular location is the nucleus. Transcription factor predominantly involved in transcriptional repression. Binds to promoter/enhancer response elements that contain the imperfect 5'-AGGTCA-3' direct or inverted repeats with various spacings which are also recognized by other nuclear hormone receptors. Involved in modulation of hormonal responses. Represses transcriptional activity of the lutropin-choriogonadotropic hormone receptor/LHCGR gene, the renin/REN gene and the oxytocin-neurophysin/OXT gene. Represses the triiodothyronine-dependent and -independent transcriptional activity of the thyroid hormone receptor gene in a cell type-specific manner. The corepressing function towards thyroid hormone receptor beta/THRB involves at least in part the inhibition of THRB binding to triiodothyronine response elements (TREs) by NR2F6. Inhibits NFATC transcription factor DNA binding and subsequently its transcriptional activity. Acts as transcriptional repressor of IL-17 expression in Th-17 differentiated CD4(+) T cells and may be involved in induction and/or maintenance of peripheral immunological tolerance and autoimmunity. Involved in development of forebrain circadian clock; is required early in the development of the locus coeruleus (LC). The protein is Nuclear receptor subfamily 2 group F member 6 (Nr2f6) of Mus musculus (Mouse).